The primary structure comprises 890 residues: uncharacterized protein (890 aa).

Residues 1-20 (MKILKSLVLLVLFMAMPAKA) form the signal peptide. Helical transmembrane passes span 518-538 (AALT…ALKL), 567-587 (TYFF…VVGA), 613-633 (LLFI…IITI), 651-671 (VIAF…IILM), 684-704 (ISTL…FLLI), and 775-795 (FLVL…SYGL). The interval 860–890 (KARKPEGGEHTNKFLAERNDVPKKEEGERKE) is disordered. Basic and acidic residues predominate over residues 862-890 (RKPEGGEHTNKFLAERNDVPKKEEGERKE).

This sequence belongs to the TrbL/VirB6 family.

The protein resides in the cell membrane. This is an uncharacterized protein from Rickettsia felis (strain ATCC VR-1525 / URRWXCal2) (Rickettsia azadi).